The chain runs to 83 residues: Toxin CjTL8 (83 aa).

The signal sequence occupies residues Met1–Ala20. Positions Lys21 to Arg44 are excised as a propeptide. Residue Phe81 is modified to Phenylalanine amide.

Contains 3 disulfide bonds.

The protein resides in the secreted. It localises to the nematocyst. In terms of biological role, in vivo, induces immediate paralysis on shrimps (C.multidentata), followed by death when high doses are injected. No activity is observed when injected into fly larvae (M.domestica). The polypeptide is Toxin CjTL8 (Epiactis japonica (Sea anemone)).